The following is a 213-amino-acid chain: Uracil phosphoribosyltransferase (213 aa).

5-phospho-alpha-D-ribose 1-diphosphate is bound by residues R78, R103, and D130–S138. Uracil-binding positions include I193 and G198 to A200. D199 serves as a coordination point for 5-phospho-alpha-D-ribose 1-diphosphate.

The protein belongs to the UPRTase family. Mg(2+) is required as a cofactor.

It catalyses the reaction UMP + diphosphate = 5-phospho-alpha-D-ribose 1-diphosphate + uracil. It participates in pyrimidine metabolism; UMP biosynthesis via salvage pathway; UMP from uracil: step 1/1. Allosterically activated by GTP. Its function is as follows. Catalyzes the conversion of uracil and 5-phospho-alpha-D-ribose 1-diphosphate (PRPP) to UMP and diphosphate. The sequence is that of Uracil phosphoribosyltransferase from Bordetella pertussis (strain Tohama I / ATCC BAA-589 / NCTC 13251).